The following is a 545-amino-acid chain: Chaperonin GroEL (545 aa).

ATP-binding positions include 31–34 (TLGP), 88–92 (DGTTT), Gly-415, 478–480 (NAA), and Asp-494.

Belongs to the chaperonin (HSP60) family. Forms a cylinder of 14 subunits composed of two heptameric rings stacked back-to-back. Interacts with the co-chaperonin GroES.

It is found in the cytoplasm. The enzyme catalyses ATP + H2O + a folded polypeptide = ADP + phosphate + an unfolded polypeptide.. Together with its co-chaperonin GroES, plays an essential role in assisting protein folding. The GroEL-GroES system forms a nano-cage that allows encapsulation of the non-native substrate proteins and provides a physical environment optimized to promote and accelerate protein folding. The chain is Chaperonin GroEL from Streptococcus pyogenes serotype M4 (strain MGAS10750).